A 121-amino-acid chain; its full sequence is Large ribosomal subunit protein bL12 (121 aa).

It belongs to the bacterial ribosomal protein bL12 family. Homodimer. Part of the ribosomal stalk of the 50S ribosomal subunit. Forms a multimeric L10(L12)X complex, where L10 forms an elongated spine to which 2 to 4 L12 dimers bind in a sequential fashion. Binds GTP-bound translation factors.

In terms of biological role, forms part of the ribosomal stalk which helps the ribosome interact with GTP-bound translation factors. Is thus essential for accurate translation. The polypeptide is Large ribosomal subunit protein bL12 (Shewanella baltica (strain OS185)).